The primary structure comprises 572 residues: Polyprotein P2A (572 aa).

3 helical membrane-spanning segments follow: residues 7-27 (LSYV…NAFI), 37-57 (IPIV…TSVV), and 77-94 (TIYV…YGVV). Positions 135-330 (ILGSTYSVVE…VSKMETLPPE (196 aa)) constitute a Peptidase S39 domain. Active-site for protease activity residues include histidine 181, aspartate 216, and serine 284. Positions 498 to 572 (QESLFPPKPR…SPASPPPTRT (75 aa)) are disordered. Over residues 508-520 (ATSSKPITTSSPG) the composition is skewed to polar residues. Residues 544–555 (LSRKQRRRRSTK) show a composition bias toward basic residues.

In terms of processing, the polyprotein is proteolytically cleaved into several chains by the viral protease.

Its subcellular location is the host membrane. Responsible for cleavages of polyprotein P2A and replicase polyprotein P2AB. Functionally, covalently attached to the 5' extremity of the genomic and subgenomic RNAs. It may serve as a primer for the replicase. This Southern cowpea mosaic virus (SCPMV) protein is Polyprotein P2A.